Here is a 354-residue protein sequence, read N- to C-terminus: Thiamine thiazole synthase 1, chloroplastic (354 aa).

Residues methionine 1–serine 43 constitute a chloroplast transit peptide. Residues alanine 96, glutamate 116 to glutamine 117, glycine 124, and valine 190 contribute to the substrate site. The residue at position 219 (cysteine 219) is a 2,3-didehydroalanine (Cys). Residues aspartate 221, histidine 236, methionine 288, and arginine 298–glycine 300 contribute to the substrate site.

It belongs to the THI4 family. Homooctamer. It depends on Fe cation as a cofactor. In terms of processing, during the catalytic reaction, a sulfide is transferred from Cys-219 to a reaction intermediate, generating a dehydroalanine residue.

It localises to the plastid. It is found in the chloroplast. It catalyses the reaction [ADP-thiazole synthase]-L-cysteine + glycine + NAD(+) = [ADP-thiazole synthase]-dehydroalanine + ADP-5-ethyl-4-methylthiazole-2-carboxylate + nicotinamide + 3 H2O + 2 H(+). Functionally, involved in biosynthesis of the thiamine precursor thiazole. Catalyzes the conversion of NAD and glycine to adenosine diphosphate 5-(2-hydroxyethyl)-4-methylthiazole-2-carboxylic acid (ADT), an adenylated thiazole intermediate. The reaction includes an iron-dependent sulfide transfer from a conserved cysteine residue of the protein to a thiazole intermediate. The enzyme can only undergo a single turnover, which suggests it is a suicide enzyme. May have additional roles in adaptation to various stress conditions and in DNA damage tolerance. In Sorghum bicolor (Sorghum), this protein is Thiamine thiazole synthase 1, chloroplastic.